A 337-amino-acid chain; its full sequence is tRNA N6-adenosine threonylcarbamoyltransferase (337 aa).

Positions 111 and 115 each coordinate Fe cation. Substrate is bound by residues 134–138 (LVSGG), D167, G180, and N272. Fe cation is bound at residue D300.

The protein belongs to the KAE1 / TsaD family. Fe(2+) is required as a cofactor.

The protein resides in the cytoplasm. It catalyses the reaction L-threonylcarbamoyladenylate + adenosine(37) in tRNA = N(6)-L-threonylcarbamoyladenosine(37) in tRNA + AMP + H(+). In terms of biological role, required for the formation of a threonylcarbamoyl group on adenosine at position 37 (t(6)A37) in tRNAs that read codons beginning with adenine. Is involved in the transfer of the threonylcarbamoyl moiety of threonylcarbamoyl-AMP (TC-AMP) to the N6 group of A37, together with TsaE and TsaB. TsaD likely plays a direct catalytic role in this reaction. The protein is tRNA N6-adenosine threonylcarbamoyltransferase of Escherichia coli (strain SMS-3-5 / SECEC).